Reading from the N-terminus, the 373-residue chain is Putative F-box/kelch-repeat protein At2g41360 (373 aa).

An F-box domain is found at 8–54 (WSSLSCLPDEMVLNCLARVPRRYYENISCVSVRLRSLVRTPELYRMR). Kelch repeat units follow at residues 116–162 (EIYF…VFDG) and 163–208 (KIHV…MVSS).

This chain is Putative F-box/kelch-repeat protein At2g41360, found in Arabidopsis thaliana (Mouse-ear cress).